The chain runs to 226 residues: Gap junction beta-2 protein (226 aa).

Residues 2–13 (DWGALQTILGGV) lie within the membrane without spanning it. The Cytoplasmic portion of the chain corresponds to 14–20 (NKHSTSI). Residues 21 to 40 (GKIWLTVLFIFRIMILVVAA) form a helical membrane-spanning segment. Topologically, residues 41–73 (KEVWGDEQADFVCNTLQPGCKNVCYDHYFPISH) are extracellular. Ca(2+)-binding residues include Glu-42, Gly-45, and Glu-47. 3 disulfides stabilise this stretch: Cys-53/Cys-180, Cys-60/Cys-174, and Cys-64/Cys-169. Residues 74–94 (IRLWALQLIFVSTPALLVAMH) form a helical membrane-spanning segment. The Cytoplasmic segment spans residues 95–135 (VAYRRHEKKRKFIKGEIKSEFKDIEEIKTQKVRIEGSLWWT). A helical transmembrane segment spans residues 136–156 (YTSSIFFRVIFEAAFMYVFYV). Residues 157 to 189 (MYDGFSMQRLVKCNAWPCPNTVDCFVSRPTEKT) lie on the Extracellular side of the membrane. A helical membrane pass occupies residues 190–210 (VFTVFMIAVSGICILLNVTEL). Topologically, residues 211–226 (CYLLIRYCSGRSKKPV) are cytoplasmic.

This sequence belongs to the connexin family. Beta-type (group I) subfamily. A hemichannel or connexon is composed of a hexamer of connexins. A functional gap junction is formed by the apposition of two hemichannels. Forms heteromeric channels with GJB4. Interacts with CNST.

It localises to the cell membrane. The protein localises to the cell junction. It is found in the gap junction. In terms of biological role, structural component of gap junctions. Gap junctions are dodecameric channels that connect the cytoplasm of adjoining cells. They are formed by the docking of two hexameric hemichannels, one from each cell membrane. Small molecules and ions diffuse from one cell to a neighboring cell via the central pore. This is Gap junction beta-2 protein (GJB2) from Pongo pygmaeus (Bornean orangutan).